A 371-amino-acid chain; its full sequence is MAAEQRRSTIFDIVSKCIVQSVLRDISINSEYIESKAKQLCYCPASKKESVINGIYNCCESNIEIMDKEQLLKILDNLRCHSAHVCNATDFWRLYNSLKRFTHTTAFFNTCKPTILATLNTLITLILSNKLLYAAEMVEYLENQLDSSNKSMSQELAELLEMKYALINLVQYRILPMIIGEPIIVAGFSGKEPISNYSAEVERLMELPVKTDIVNTTYDFLARKGIDTSNNIAEYIAGLKIEEIEKVEKYLPEVISTIANSNIIKNKKSIFPANINDKQIMECSKMLDTSEKYSKGYKTDGAVTSPLTGNNTITTFIPISASDMQKFTILEYLYIMRVMANNVKKKNEGKNNGGVVMHINSPFKVINLPKC.

It belongs to the chordopoxvirinae G7 family. Part of a complex composed of A30, G7, F10 kinase, A15, D2, D3, and J1. Phosphorylated on serines by F10 kinase, phosphorylation state is regulated by H1 phosphatase. In terms of processing, undergoes proteolytic processing during morphogenesis, probably required for the transformation of immature virions (IV) into mature virions (MV).

It is found in the host cytoplasm. Its subcellular location is the virion. Its function is as follows. Late protein which is a part of a large complex required for early virion morphogenesis. This complex participates in the formation of virosomes and the incorporation of virosomal contents into nascent immature virions. This chain is Assembly protein G7, found in Variola virus (isolate Human/India/Ind3/1967) (VARV).